Reading from the N-terminus, the 241-residue chain is MSGHNKWSKIKNKKGSEDARRGKIFTKMARAITVAVREGGADPEYNPSLKSVIEKARAENMPNDNIDRAIKKASGDGDSANYENIVYEGYGPEGVAVIVECLTDNRNRTASDVRHYFDKFGGNLGQNGSVSFMFQRKGLLLIDADSLDEEEVMMDSLDAGAEDFEADDGIFVINTAMEDFAQVRDTLLDKGYKFVKSDLVYEPSNYVKINDESNVDKMEKLIDNLEDSDDVQQVSHNWDNE.

This sequence belongs to the TACO1 family.

Its subcellular location is the cytoplasm. The polypeptide is Probable transcriptional regulatory protein FMG_0893 (Finegoldia magna (strain ATCC 29328 / DSM 20472 / WAL 2508) (Peptostreptococcus magnus)).